Reading from the N-terminus, the 114-residue chain is MITRNYETLYIIRPDVGEEQLEQTISQFRTFLEEQGATKLKVQNRGKRRFAYPIKKLREGYYILMTYTAPGTAIAPLERAMRLNENILRFMTIVLEEETETEDAEEENPVLARA.

This sequence belongs to the bacterial ribosomal protein bS6 family.

Its function is as follows. Binds together with bS18 to 16S ribosomal RNA. The polypeptide is Small ribosomal subunit protein bS6 (Thermosynechococcus vestitus (strain NIES-2133 / IAM M-273 / BP-1)).